The primary structure comprises 591 residues: Aspartate--tRNA(Asp/Asn) ligase (591 aa).

Glutamate 174 provides a ligand contact to L-aspartate. The segment at 198–201 (QLFK) is aspartate. Arginine 220 contributes to the L-aspartate binding site. ATP-binding positions include 220–222 (RDE) and glutamine 229. An L-aspartate-binding site is contributed by histidine 450. Glutamate 483 serves as a coordination point for ATP. Arginine 490 lines the L-aspartate pocket. 535 to 538 (GLDR) provides a ligand contact to ATP.

It belongs to the class-II aminoacyl-tRNA synthetase family. Type 1 subfamily. As to quaternary structure, homodimer.

The protein localises to the cytoplasm. The catalysed reaction is tRNA(Asx) + L-aspartate + ATP = L-aspartyl-tRNA(Asx) + AMP + diphosphate. In terms of biological role, aspartyl-tRNA synthetase with relaxed tRNA specificity since it is able to aspartylate not only its cognate tRNA(Asp) but also tRNA(Asn). Reaction proceeds in two steps: L-aspartate is first activated by ATP to form Asp-AMP and then transferred to the acceptor end of tRNA(Asp/Asn). This chain is Aspartate--tRNA(Asp/Asn) ligase, found in Pseudomonas syringae pv. syringae (strain B728a).